We begin with the raw amino-acid sequence, 430 residues long: Adenylosuccinate synthetase (430 aa).

GTP contacts are provided by residues 13-19 and 41-43; these read GDEGKGK and GHT. The active-site Proton acceptor is D14. Residues D14 and G41 each coordinate Mg(2+). IMP contacts are provided by residues 14-17, 39-42, T130, R144, Q225, T240, and R304; these read DEGK and NAGH. H42 (proton donor) is an active-site residue. 300 to 306 provides a ligand contact to substrate; it reads ASTGRPR. GTP contacts are provided by residues R306, 332 to 334, and 414 to 416; these read KLD and STG.

The protein belongs to the adenylosuccinate synthetase family. In terms of assembly, homodimer. Mg(2+) serves as cofactor.

Its subcellular location is the cytoplasm. It carries out the reaction IMP + L-aspartate + GTP = N(6)-(1,2-dicarboxyethyl)-AMP + GDP + phosphate + 2 H(+). It functions in the pathway purine metabolism; AMP biosynthesis via de novo pathway; AMP from IMP: step 1/2. Its function is as follows. Plays an important role in the de novo pathway of purine nucleotide biosynthesis. Catalyzes the first committed step in the biosynthesis of AMP from IMP. The polypeptide is Adenylosuccinate synthetase (Xanthomonas oryzae pv. oryzae (strain PXO99A)).